The primary structure comprises 681 residues: MRKKLFGQLQRIGKALMLPVAILPAAGLLLAIGTAMQGEALQHYLPFIQNGGVQTVAKLMTGAGGIIFDNLPMIFALGVAIGLAGGDGVAAIAAFVGYIIMNKTMGDFLQVTPKNIGDPASGYASILGIPTLQTGVFGGIIIGALAAWCYNKFYNINLPSYLGFFAGKRFVPIMMATTSFILAFPMALIWPTIQTGLNAFSTGLLDSNTGVAVFLFGFIKRLLIPFGLHHIFHAPFWFEFGSWKNAAGEIIHGDQRIFIEQIREGAHLTAGKFMQGEFPVMMFGLPAAALAIYHTAKPENKKVVAGLMGSAALTSFLTGITEPLEFSFLFVAPLLFFIHAVLDGLSFLTLYLLDLHLGYTFSGGFIDYFLLGILPNKTQWWLVIPVGLVYAVIYYFVFRFLIVKLKYKTPGREDKQSQAATASATELPYAVLEAMGGKANIKHLDACITRLRVEVNDKSKVDVPGLKDLGASGVLEVGNNMQAIFGPKSDQIKHEMQQIMNGQVVENPTTMEDDKDETVVVAEDKSATSELSHIVHAPLTGEVTPLSEVPDQVFSEKMMGDGIAIKPSQGEVRAPFNGKVQMIFPTKHAIGLVSDSGLELLIHIGLDTVKLNGEGFTLHVEEGQEVKQGDLLINFDLDYIRNHAKSDITPIIVTQGNITNLDFKQGEHGNISFGDQLFEAK.

The 412-residue stretch at 3–414 (KKLFGQLQRI…LKYKTPGRED (412 aa)) folds into the PTS EIIC type-1 domain. A run of 10 helical transmembrane segments spans residues 16–36 (LMLP…GTAM), 73–93 (MIFA…AAIA), 126–146 (ILGI…GALA), 170–190 (FVPI…ALIW), 199–219 (AFST…FGFI), 273–293 (FMQG…LAIY), 303–323 (VVAG…ITEP), 328–348 (FLFV…LSFL), 355–375 (LHLG…GILP), and 383–403 (VIPV…FLIV). Residues 425–506 (TELPYAVLEA…QQIMNGQVVE (82 aa)) form the PTS EIIB type-1 domain. The active-site Phosphocysteine intermediate; for EIIB activity is C447. Residues 551-655 (DQVFSEKMMG…SDITPIIVTQ (105 aa)) form the PTS EIIA type-1 domain. H603 (tele-phosphohistidine intermediate; for EIIA activity) is an active-site residue.

It localises to the cell membrane. The catalysed reaction is N(pros)-phospho-L-histidyl-[protein] + D-glucose(out) = D-glucose 6-phosphate(in) + L-histidyl-[protein]. Functionally, the phosphoenolpyruvate-dependent sugar phosphotransferase system (sugar PTS), a major carbohydrate active transport system, catalyzes the phosphorylation of incoming sugar substrates concomitantly with their translocation across the cell membrane. This system is involved in glucose transport. The polypeptide is PTS system glucose-specific EIICBA component (ptsG) (Staphylococcus aureus (strain MRSA252)).